Reading from the N-terminus, the 179-residue chain is Large ribosomal subunit protein uL6 (179 aa).

This sequence belongs to the universal ribosomal protein uL6 family. As to quaternary structure, part of the 50S ribosomal subunit.

Its function is as follows. This protein binds to the 23S rRNA, and is important in its secondary structure. It is located near the subunit interface in the base of the L7/L12 stalk, and near the tRNA binding site of the peptidyltransferase center. This chain is Large ribosomal subunit protein uL6, found in Nocardia farcinica (strain IFM 10152).